A 484-amino-acid polypeptide reads, in one-letter code: Protein nucleotidyltransferase YdiU (484 aa).

ATP-binding residues include glycine 81, glycine 83, arginine 84, lysine 103, aspartate 115, glycine 116, arginine 166, and arginine 173. Residue aspartate 244 is the Proton acceptor of the active site. Asparagine 245 and aspartate 254 together coordinate Mg(2+). Aspartate 254 serves as a coordination point for ATP.

Belongs to the SELO family. The cofactor is Mg(2+). It depends on Mn(2+) as a cofactor.

It catalyses the reaction L-seryl-[protein] + ATP = 3-O-(5'-adenylyl)-L-seryl-[protein] + diphosphate. The enzyme catalyses L-threonyl-[protein] + ATP = 3-O-(5'-adenylyl)-L-threonyl-[protein] + diphosphate. The catalysed reaction is L-tyrosyl-[protein] + ATP = O-(5'-adenylyl)-L-tyrosyl-[protein] + diphosphate. It carries out the reaction L-histidyl-[protein] + UTP = N(tele)-(5'-uridylyl)-L-histidyl-[protein] + diphosphate. It catalyses the reaction L-seryl-[protein] + UTP = O-(5'-uridylyl)-L-seryl-[protein] + diphosphate. The enzyme catalyses L-tyrosyl-[protein] + UTP = O-(5'-uridylyl)-L-tyrosyl-[protein] + diphosphate. Functionally, nucleotidyltransferase involved in the post-translational modification of proteins. It can catalyze the addition of adenosine monophosphate (AMP) or uridine monophosphate (UMP) to a protein, resulting in modifications known as AMPylation and UMPylation. The protein is Protein nucleotidyltransferase YdiU of Shewanella putrefaciens (strain CN-32 / ATCC BAA-453).